Reading from the N-terminus, the 346-residue chain is Upstream stimulatory factor 2 (346 aa).

Disordered regions lie at residues 1 to 44 (MDML…PGAE) and 215 to 244 (APRT…NEVE). Residues 11–20 (AASATAAAAA) show a composition bias toward low complexity. The segment covering 226–244 (DGTRTPRDERRRAQHNEVE) has biased composition (basic and acidic residues). A bHLH domain is found at 235-290 (RRRAQHNEVERRRRDKINNWIVQLSKIIPDCNADNSKTGASKGGILSKACDYIREL). Residues 307-328 (LQMDNELLRQQIEELKNENALL) form a leucine-zipper region.

In terms of assembly, interacts with MAF. Efficient DNA binding requires dimerization with another bHLH protein. Binds DNA as a homodimer or a heterodimer (USF1/USF2). In vivo, the USF1/USF2A heterodimer represents over 66% of the usf binding activity whereas the USF1 and USF2A homodimers represent less than 10%. The USF1/USF2B heterodimer accounted for almost 15% in some cell. Ubiquitous.

The protein resides in the nucleus. Transcription factor that binds to a symmetrical DNA sequence (E-boxes) (5'-CACGTG-3') that is found in a variety of viral and cellular promoters. This Homo sapiens (Human) protein is Upstream stimulatory factor 2 (USF2).